The following is a 321-amino-acid chain: Biotin synthase (321 aa).

In terms of domain architecture, Radical SAM core spans 45–274 (FHGNRVDLCS…GALIRLCGGR (230 aa)). [4Fe-4S] cluster-binding residues include cysteine 63, cysteine 67, and cysteine 70. The [2Fe-2S] cluster site is built by cysteine 139, cysteine 199, and arginine 269.

It belongs to the radical SAM superfamily. Biotin synthase family. In terms of assembly, homodimer. It depends on [4Fe-4S] cluster as a cofactor. The cofactor is [2Fe-2S] cluster.

It carries out the reaction (4R,5S)-dethiobiotin + (sulfur carrier)-SH + 2 reduced [2Fe-2S]-[ferredoxin] + 2 S-adenosyl-L-methionine = (sulfur carrier)-H + biotin + 2 5'-deoxyadenosine + 2 L-methionine + 2 oxidized [2Fe-2S]-[ferredoxin]. It participates in cofactor biosynthesis; biotin biosynthesis; biotin from 7,8-diaminononanoate: step 2/2. In terms of biological role, catalyzes the conversion of dethiobiotin (DTB) to biotin by the insertion of a sulfur atom into dethiobiotin via a radical-based mechanism. The polypeptide is Biotin synthase (Pelotomaculum thermopropionicum (strain DSM 13744 / JCM 10971 / SI)).